Here is a 151-residue protein sequence, read N- to C-terminus: Ribosome maturation factor RimP (151 aa).

Belongs to the RimP family.

It localises to the cytoplasm. Required for maturation of 30S ribosomal subunits. The sequence is that of Ribosome maturation factor RimP from Shewanella denitrificans (strain OS217 / ATCC BAA-1090 / DSM 15013).